Reading from the N-terminus, the 293-residue chain is 4-hydroxy-tetrahydrodipicolinate synthase (293 aa).

Thr-47 provides a ligand contact to pyruvate. The active-site Proton donor/acceptor is Tyr-136. The active-site Schiff-base intermediate with substrate is Lys-164. Position 206 (Ile-206) interacts with pyruvate.

Belongs to the DapA family. Homotetramer; dimer of dimers.

Its subcellular location is the cytoplasm. It catalyses the reaction L-aspartate 4-semialdehyde + pyruvate = (2S,4S)-4-hydroxy-2,3,4,5-tetrahydrodipicolinate + H2O + H(+). Its pathway is amino-acid biosynthesis; L-lysine biosynthesis via DAP pathway; (S)-tetrahydrodipicolinate from L-aspartate: step 3/4. Catalyzes the condensation of (S)-aspartate-beta-semialdehyde [(S)-ASA] and pyruvate to 4-hydroxy-tetrahydrodipicolinate (HTPA). This is 4-hydroxy-tetrahydrodipicolinate synthase from Listeria welshimeri serovar 6b (strain ATCC 35897 / DSM 20650 / CCUG 15529 / CIP 8149 / NCTC 11857 / SLCC 5334 / V8).